We begin with the raw amino-acid sequence, 332 residues long: DNA-directed RNA polymerase subunit alpha (332 aa).

An alpha N-terminal domain (alpha-NTD) region spans residues M1–T234. Residues V248–G332 are alpha C-terminal domain (alpha-CTD).

Belongs to the RNA polymerase alpha chain family. Homodimer. The RNAP catalytic core consists of 2 alpha, 1 beta, 1 beta' and 1 omega subunit. When a sigma factor is associated with the core the holoenzyme is formed, which can initiate transcription.

The enzyme catalyses RNA(n) + a ribonucleoside 5'-triphosphate = RNA(n+1) + diphosphate. In terms of biological role, DNA-dependent RNA polymerase catalyzes the transcription of DNA into RNA using the four ribonucleoside triphosphates as substrates. The sequence is that of DNA-directed RNA polymerase subunit alpha from Stenotrophomonas maltophilia (strain R551-3).